Here is a 35-residue protein sequence, read N- to C-terminus: U1-segestritoxin-Sf1a (35 aa).

2 cysteine pairs are disulfide-bonded: Cys10–Cys22 and Cys17–Cys28. The interval 31–33 is keys region for toxin activity; the sequence is DPW.

It belongs to the neurotoxin 16 (SFI) family. In terms of tissue distribution, expressed by the venom gland.

The protein localises to the secreted. Functionally, insecticidal toxin. This Segestria florentina (Tube-web spider) protein is U1-segestritoxin-Sf1a.